Here is a 613-residue protein sequence, read N- to C-terminus: Chaperone protein DnaK (613 aa).

Positions 579–613 (MYQSASSTTQTGSGNQNSSKQENDKTVDAEYKEKS) are disordered. Residues 581 to 597 (QSASSTTQTGSGNQNSS) are compositionally biased toward low complexity. Basic and acidic residues predominate over residues 599–613 (QENDKTVDAEYKEKS).

It belongs to the heat shock protein 70 family.

In terms of biological role, acts as a chaperone. The polypeptide is Chaperone protein DnaK (Thermoplasma volcanium (strain ATCC 51530 / DSM 4299 / JCM 9571 / NBRC 15438 / GSS1)).